The primary structure comprises 221 residues: Retinitis pigmentosa 9 protein (221 aa).

Composition is skewed to basic and acidic residues over residues 1–10, 17–29, and 60–69; these read MSSRPGREDV, RPRE…LQRR, and IKEDETKPED. The segment at 1–76 is disordered; sequence MSSRPGREDV…PEDCIPDVPG (76 aa). Residues 1 to 155 form a PIM1-binding region; that stretch reads MSSRPGREDV…RDNKRHEKDV (155 aa). A CCHC-type zinc finger spans residues 104–122; sequence QCWRCKRYGHRTGDKECPF. Residue Lys-129 forms a Glycyl lysine isopeptide (Lys-Gly) (interchain with G-Cter in SUMO2) linkage. Positions 147 to 156 are enriched in basic and acidic residues; the sequence is DNKRHEKDVR. Positions 147-221 are disordered; sequence DNKRHEKDVR…SKSNEGSDSE (75 aa). Positions 184–212 are enriched in basic residues; sequence KHKKKKKKEKHKKRKKEKKKKKKRKHKSS. Residues Ser-212 and Ser-214 each carry the phosphoserine; by PIM1 modification.

Binds to PIM1. Binds to ZNHIT4. Appears to be expressed in a wide range of tissues.

The protein localises to the nucleus. Functionally, is thought to be a target protein for the PIM1 kinase. May play some roles in B-cell proliferation in association with PIM1. In Homo sapiens (Human), this protein is Retinitis pigmentosa 9 protein (RP9).